We begin with the raw amino-acid sequence, 574 residues long: Choline transporter-like protein ctl1 (574 aa).

N-linked (GlcNAc...) asparagine glycosylation is found at Asn40 and Asn101. 8 helical membrane passes run 144–164 (WGLTFGFLTLALFTYSFLMVW), 189–209 (KDAIICMMLSVIWLFCLVAIP), 211–231 (FLYFLLASVPLTMFAFAVYLL), 246–266 (LMLLTGIILLVAPILLSYYVW), 291–311 (QITLIFISFLFSFYVLIFIWV), 336–356 (WVLASFYSLHFLWLCTFFHAL), 396–416 (YGLCAFSSFLVVITKVPLHFL), and 434–456 (TSASYVTSPLTLAYASIYSVPYM). The N-linked (GlcNAc...) asparagine glycan is linked to Asn457. A run of 2 helical transmembrane segments spans residues 485 to 505 (LLAARSLLAIGVGVTSWNYSI) and 511 to 531 (FYGYIVGLLGGFLAWLIIGAI). Asn558 is a glycosylation site (N-linked (GlcNAc...) asparagine).

This sequence belongs to the CTL (choline transporter-like) family. In terms of assembly, interacts with atg9.

Its subcellular location is the endoplasmic reticulum membrane. It localises to the preautophagosomal structure membrane. In terms of biological role, required for the normal organization of the preautophagosomal structure (PAS) and for the correct subcellular location of atg9. The polypeptide is Choline transporter-like protein ctl1 (ctl1) (Schizosaccharomyces pombe (strain 972 / ATCC 24843) (Fission yeast)).